Reading from the N-terminus, the 216-residue chain is MPKFFCDYCDVYLTHDSMSVRKAHNSGRNHLRNVVDYYQQIGHEKAQSVIDSITSSYAAEGQAHANPMLPQNQPGGVPPGLGFPPPGAGVPPFPPFPGGMPPPFPGMPGGAPVPPPGAFGAPGVPGGIPPPGAPGARGMPPMPPFPGMPGAPAGIPGVPPPMPGPGGLPFPPPGGLPFPPPGAGNFPFPPPGAPGAFPGMPPFGAPGQGPPGADKR.

The Matrin-type zinc-finger motif lies at 4–36 (FFCDYCDVYLTHDSMSVRKAHNSGRNHLRNVVD). Disordered regions lie at residues 70-89 (PQNQ…PGAG) and 125-216 (PGGI…ADKR). Pro residues-rich tracts occupy residues 140-149 (PPMPPFPGMP) and 157-204 (GVPP…PPFG).

Belongs to the U1 small nuclear ribonucleoprotein C family. In terms of assembly, U1 snRNP is composed of the 7 core Sm proteins B/B', D1, D2, D3, E, F and G that assemble in a heptameric protein ring on the Sm site of the small nuclear RNA to form the core snRNP, and at least 3 U1 snRNP-specific proteins U1-70K, U1-A and U1-C. U1-C interacts with U1 snRNA and the 5' splice-site region of the pre-mRNA.

It is found in the nucleus. In terms of biological role, component of the spliceosomal U1 snRNP, which is essential for recognition of the pre-mRNA 5' splice-site and the subsequent assembly of the spliceosome. U1-C is directly involved in initial 5' splice-site recognition for both constitutive and regulated alternative splicing. The interaction with the 5' splice-site seems to precede base-pairing between the pre-mRNA and the U1 snRNA. Stimulates commitment or early (E) complex formation by stabilizing the base pairing of the 5' end of the U1 snRNA and the 5' splice-site region. This is U1 small nuclear ribonucleoprotein C from Neurospora crassa (strain ATCC 24698 / 74-OR23-1A / CBS 708.71 / DSM 1257 / FGSC 987).